A 215-amino-acid chain; its full sequence is C' protein (215 aa).

The tract at residues 12–34 (MPSFLKKILKLRGRRQEDESRSR) is disordered. The involved in self-degradation and in host STAT1 degradation stretch occupies residues 15 to 22 (FLKKILKL).

Belongs to the respirovirus protein C family. In terms of assembly, the different isoforms interact (via C-terminus) with unphosphorylated and phosphorylated human STAT1 (via N-terminus), favoring the formation of parallel STAT1 homodimers. The different isoforms do not interact with host STAT2. C protein interacts with L protein; this interaction has an inhibitory effect on viral transcription and replication. Post-translationally, Y1 and Y2 proteins are produced not only by alternative initiation, but also by proteolytic cleavage of C'. Only alternative initiation is detected in vitro, whereas in vivo cleavage seems to be predominant.

Its subcellular location is the host cytoplasm. The protein resides in the virion. The different isoforms prevent the establishment of cellular antiviral state by blocking the interferon-alpha/beta (IFN-alpha/beta) and IFN-gamma signaling pathways. They inhibit IFN-alpha/beta induced tyrosine phosphorylation of STAT1 and STAT2. Blocking the IFN-alpha/beta pathway requires binding to STAT1 in the cytoplasm. They inhibit IFN-gamma induced serine phosphorylation of STAT1. Block the IFN-gamma pathway by binding to and stabilizing the parallel form of the STAT1 dimer, further inducing high-molecular-weight complex (HMWC) formation and inhibition of transcription by IFN-gamma. May also have a role in preventing the cell to enter apoptosis. Modulate regulation of viral transcription and replication. Overexpression inhibits the viral RNA polymerase. The absence of all C', C, Y1 and Y2 proteins leads to viral delayed growth. Plays an important role in virion particles release. Modulates virion shape. This is C' protein (P/V/C) from Sendai virus (strain Z) (SeV).